The sequence spans 273 residues: Putative phosphoenolpyruvate synthase regulatory protein (273 aa).

154–161 (GVSRSGKT) provides a ligand contact to ADP.

Belongs to the pyruvate, phosphate/water dikinase regulatory protein family. PSRP subfamily.

It catalyses the reaction [pyruvate, water dikinase] + ADP = [pyruvate, water dikinase]-phosphate + AMP + H(+). The catalysed reaction is [pyruvate, water dikinase]-phosphate + phosphate + H(+) = [pyruvate, water dikinase] + diphosphate. Functionally, bifunctional serine/threonine kinase and phosphorylase involved in the regulation of the phosphoenolpyruvate synthase (PEPS) by catalyzing its phosphorylation/dephosphorylation. The sequence is that of Putative phosphoenolpyruvate synthase regulatory protein from Halorhodospira halophila (strain DSM 244 / SL1) (Ectothiorhodospira halophila (strain DSM 244 / SL1)).